We begin with the raw amino-acid sequence, 484 residues long: Probable receptor-like protein kinase At5g18500 (484 aa).

Residues 21-41 (IIVIVLSAIFVVVLAISLWLT) traverse the membrane as a helical segment. The segment at 72-135 (RVDEVSSSNG…SVSSANPLTA (64 aa)) is disordered. Residues 91–105 (KFGDKEPEKGIKAES) are compositionally biased toward basic and acidic residues. Residues 125–134 (SSVSSANPLT) are compositionally biased toward polar residues. The residue at position 155 (T155) is a Phosphothreonine. The Protein kinase domain occupies 166-445 (FSRDNIIGDG…MLESEEYPIA (280 aa)). Residues 172–180 (IGDGGYGVV) and K194 each bind ATP. A Phosphotyrosine modification is found at Y239. Catalysis depends on D292, which acts as the Proton acceptor. The residue at position 296 (S296) is a Phosphoserine. Phosphothreonine is present on residues T326 and T331. Residue Y339 is modified to Phosphotyrosine. The tract at residues 425 to 484 (EKRPRMSQVARMLESEEYPIAREDRRRRRSQNGTTRDSDPPRNSTDTDKSEYHDLKPEGG) is disordered. The span at 460–484 (RDSDPPRNSTDTDKSEYHDLKPEGG) shows a compositional bias: basic and acidic residues.

Belongs to the protein kinase superfamily. Ser/Thr protein kinase family.

It localises to the cell membrane. It catalyses the reaction L-seryl-[protein] + ATP = O-phospho-L-seryl-[protein] + ADP + H(+). It carries out the reaction L-threonyl-[protein] + ATP = O-phospho-L-threonyl-[protein] + ADP + H(+). The polypeptide is Probable receptor-like protein kinase At5g18500 (Arabidopsis thaliana (Mouse-ear cress)).